The chain runs to 436 residues: Trigger factor (436 aa).

A PPIase FKBP-type domain is found at 163–248 (GDRVTIDFEG…VKKIEAAHLP (86 aa)).

This sequence belongs to the FKBP-type PPIase family. Tig subfamily.

The protein resides in the cytoplasm. The enzyme catalyses [protein]-peptidylproline (omega=180) = [protein]-peptidylproline (omega=0). In terms of biological role, involved in protein export. Acts as a chaperone by maintaining the newly synthesized protein in an open conformation. Functions as a peptidyl-prolyl cis-trans isomerase. The protein is Trigger factor of Polaromonas naphthalenivorans (strain CJ2).